A 359-amino-acid polypeptide reads, in one-letter code: 3-dehydroquinate synthase (359 aa).

NAD(+) contacts are provided by residues 71–76, 105–109, 129–130, Lys142, Lys151, and 169–172; these read DGEQFK, GVIGD, TT, and CLQT. Residues Glu184, His247, and His264 each coordinate Zn(2+).

Belongs to the sugar phosphate cyclases superfamily. Dehydroquinate synthase family. Co(2+) is required as a cofactor. It depends on Zn(2+) as a cofactor. The cofactor is NAD(+).

The protein localises to the cytoplasm. It catalyses the reaction 7-phospho-2-dehydro-3-deoxy-D-arabino-heptonate = 3-dehydroquinate + phosphate. It functions in the pathway metabolic intermediate biosynthesis; chorismate biosynthesis; chorismate from D-erythrose 4-phosphate and phosphoenolpyruvate: step 2/7. In terms of biological role, catalyzes the conversion of 3-deoxy-D-arabino-heptulosonate 7-phosphate (DAHP) to dehydroquinate (DHQ). This chain is 3-dehydroquinate synthase, found in Shewanella sp. (strain MR-4).